The sequence spans 296 residues: Acetyl-coenzyme A carboxylase carboxyl transferase subunit beta (296 aa).

The region spanning 25–294 is the CoA carboxyltransferase N-terminal domain; the sequence is VWTKCTACEQ…PFVEPELISE (270 aa). C29, C32, C48, and C51 together coordinate Zn(2+). Residues 29–51 form a C4-type zinc finger; that stretch reads CTACEQVLYSEELKRNLYVCPKC.

This sequence belongs to the AccD/PCCB family. Acetyl-CoA carboxylase is a heterohexamer composed of biotin carboxyl carrier protein (AccB), biotin carboxylase (AccC) and two subunits each of ACCase subunit alpha (AccA) and ACCase subunit beta (AccD). Requires Zn(2+) as cofactor.

Its subcellular location is the cytoplasm. The catalysed reaction is N(6)-carboxybiotinyl-L-lysyl-[protein] + acetyl-CoA = N(6)-biotinyl-L-lysyl-[protein] + malonyl-CoA. The protein operates within lipid metabolism; malonyl-CoA biosynthesis; malonyl-CoA from acetyl-CoA: step 1/1. Its function is as follows. Component of the acetyl coenzyme A carboxylase (ACC) complex. Biotin carboxylase (BC) catalyzes the carboxylation of biotin on its carrier protein (BCCP) and then the CO(2) group is transferred by the transcarboxylase to acetyl-CoA to form malonyl-CoA. This chain is Acetyl-coenzyme A carboxylase carboxyl transferase subunit beta, found in Haemophilus influenzae (strain 86-028NP).